A 142-amino-acid chain; its full sequence is Myosin-2 essential light chain (142 aa).

EF-hand domains are found at residues 2–37 (DDLA…LGQN) and 75–110 (HTVE…LGER).

In terms of assembly, myosin is a hexamer of 2 heavy chains and 4 light chains (two regulatory light chains and two essential light chains).

Its subcellular location is the cytoplasm. The protein localises to the cytoskeleton. In terms of biological role, required for cytokinesis and embryo elongation. May regulate myosin II complex formation and/or the association of myosin with actin. May be involved in the organization of mlc-4 and nmy-2 into bundles. This is Myosin-2 essential light chain from Caenorhabditis elegans.